The sequence spans 492 residues: N-succinylglutamate 5-semialdehyde dehydrogenase (492 aa).

Residue glycine 220 to glycine 225 coordinates NAD(+). Residues glutamate 243 and cysteine 277 contribute to the active site.

This sequence belongs to the aldehyde dehydrogenase family. AstD subfamily.

The enzyme catalyses N-succinyl-L-glutamate 5-semialdehyde + NAD(+) + H2O = N-succinyl-L-glutamate + NADH + 2 H(+). Its pathway is amino-acid degradation; L-arginine degradation via AST pathway; L-glutamate and succinate from L-arginine: step 4/5. In terms of biological role, catalyzes the NAD-dependent reduction of succinylglutamate semialdehyde into succinylglutamate. The protein is N-succinylglutamate 5-semialdehyde dehydrogenase of Escherichia coli O17:K52:H18 (strain UMN026 / ExPEC).